Consider the following 385-residue polypeptide: MTVNGKDIDSPNAQYVAAGIDMSDLFPAPFPTNVKTVHLETLSLAKLLQRDEDELRRIYENCKDPGFFQLDLTDDEQGVQLLQDAVDCARLMKQLLPNMSVEEKRMYKQHSRVGVYSKGYQVYDVLPNGQPKYNETVNFPMTEMLGYGDSTVDLPDWLSPHRELFQRTMRSGNKIANIVLAALEVGLQVPRGALTDAHRIQDPSDDFLRLLRYPGLQPGQPRDDLCFPAHKDFTSLGILFTWLGGLQLLASASAPGVTSGTMTGPLDIAEDAWRWVQPVPGTAIVNVGNALEILTNKALTSGLHRVVRAPGEQLPFDRYSVLVGTRPANSFPMKPLQSPQISPVLDPAAAEIATMTSGQWGTHNIGSFNNWVKARTERQEVLIIP.

Residues 203 to 327 (PSDDFLRLLR…RYSVLVGTRP (125 aa)) form the Fe2OG dioxygenase domain. Fe cation is bound by residues His-230, Asp-232, and His-304. Arg-318 contributes to the 2-oxoglutarate binding site.

This sequence belongs to the iron/ascorbate-dependent oxidoreductase family. It depends on Fe(2+) as a cofactor.

2-oxoglutarate-dependent dioxygenase; part of the gene cluster that mediates the biosynthesis of fumigermin that inhibits germination of spores of the inducing S.rapamycinicus, and thus helps the fungus to defend resources in the shared habitat against a bacterial competitor. The partially reducing polyketide synthase fngA alone is sufficient for the production of fumigermin. FgnA catalyzes the condensation of 3 malonyl-CoA units to an acetyl-CoA starter, and 3 methylations to yield fumigermin. It is remarkable that the five cluster genes including fgnA are conserved in distantly related fungi, supporting the assumption of a fumigermin cluster; it is thus possible that originally all five genes were functional, but that the genes encoding tailoring enzymes became inactive from mutations, similar to the case of the fgnA gene in strains A1163 and Af293. This Aspergillus fumigatus (strain ATCC MYA-4609 / CBS 101355 / FGSC A1100 / Af293) (Neosartorya fumigata) protein is 2-oxoglutarate-dependent dioxygenase AFUA_1G01000.